A 290-amino-acid polypeptide reads, in one-letter code: Bifunctional protein FolD (290 aa).

NADP(+) contacts are provided by residues 167-169 (GRS), Ser-192, and Ile-233.

Belongs to the tetrahydrofolate dehydrogenase/cyclohydrolase family. In terms of assembly, homodimer.

The enzyme catalyses (6R)-5,10-methylene-5,6,7,8-tetrahydrofolate + NADP(+) = (6R)-5,10-methenyltetrahydrofolate + NADPH. It catalyses the reaction (6R)-5,10-methenyltetrahydrofolate + H2O = (6R)-10-formyltetrahydrofolate + H(+). Its pathway is one-carbon metabolism; tetrahydrofolate interconversion. Its function is as follows. Catalyzes the oxidation of 5,10-methylenetetrahydrofolate to 5,10-methenyltetrahydrofolate and then the hydrolysis of 5,10-methenyltetrahydrofolate to 10-formyltetrahydrofolate. The chain is Bifunctional protein FolD from Gloeobacter violaceus (strain ATCC 29082 / PCC 7421).